We begin with the raw amino-acid sequence, 504 residues long: UDP-N-acetylmuramoylalanine--D-glutamate ligase (504 aa).

Residue 129-135 (GTNGKTT) coordinates ATP.

It belongs to the MurCDEF family.

The protein resides in the cytoplasm. The catalysed reaction is UDP-N-acetyl-alpha-D-muramoyl-L-alanine + D-glutamate + ATP = UDP-N-acetyl-alpha-D-muramoyl-L-alanyl-D-glutamate + ADP + phosphate + H(+). It participates in cell wall biogenesis; peptidoglycan biosynthesis. Functionally, cell wall formation. Catalyzes the addition of glutamate to the nucleotide precursor UDP-N-acetylmuramoyl-L-alanine (UMA). In Burkholderia pseudomallei (strain 668), this protein is UDP-N-acetylmuramoylalanine--D-glutamate ligase.